A 420-amino-acid chain; its full sequence is Putative sporulation-specific glycosylase YdhD (420 aa).

LysM domains follow at residues 2–45 (FIHI…ALLI) and 48–92 (YVYT…KITI). The GH18 domain maps to 100–420 (AGTLSFYVLR…LRKFFTIRKV (321 aa)). E212 (proton donor) is an active-site residue.

Belongs to the glycosyl hydrolase 18 family. Chitinase class II subfamily.

The protein localises to the spore wall. The protein is Putative sporulation-specific glycosylase YdhD (ydhD) of Bacillus subtilis (strain 168).